The sequence spans 178 residues: Putative metal-dependent hydrolase GK0616 (178 aa).

The Zn(2+) site is built by His68, His161, and His165.

Belongs to the metal hydrolase YfiT family. Homodimer. The cofactor is Zn(2+).

Its subcellular location is the cytoplasm. Its function is as follows. Possible metal-dependent hydrolase. The chain is Putative metal-dependent hydrolase GK0616 from Geobacillus kaustophilus (strain HTA426).